The chain runs to 210 residues: Glutathione S-transferase-like protein FUS3 (210 aa).

The GST N-terminal domain maps to 1–74; that stretch reads MPNARVFKIL…YVAQSGPQAS (74 aa). In terms of domain architecture, GST C-terminal spans 80–206; sequence DAMSSAKIRQ…GKPNFIEKRR (127 aa).

Belongs to the GST superfamily.

Its function is as follows. Glutathione S-transferase-like protein; part of the gene cluster that mediates the biosynthesis of the mycotoxin fusarin C. Within the cluster, FUS1, FUS2, FUS8 and FUS9 are sufficient for fusarin production. The other FUS cluster members are not essential for fusarin C biosynthesis. This chain is Glutathione S-transferase-like protein FUS3, found in Gibberella fujikuroi (strain CBS 195.34 / IMI 58289 / NRRL A-6831) (Bakanae and foot rot disease fungus).